The following is a 213-amino-acid chain: Orotate phosphoribosyltransferase (213 aa).

Lys-26 contributes to the 5-phospho-alpha-D-ribose 1-diphosphate binding site. Position 34–35 (34–35 (FF)) interacts with orotate. Residues 72-73 (YK), Arg-99, Lys-100, Lys-103, His-105, and 124-132 (DDVITAGTA) contribute to the 5-phospho-alpha-D-ribose 1-diphosphate site. Orotate contacts are provided by Thr-128 and Arg-156.

It belongs to the purine/pyrimidine phosphoribosyltransferase family. PyrE subfamily. Homodimer. Mg(2+) is required as a cofactor.

The enzyme catalyses orotidine 5'-phosphate + diphosphate = orotate + 5-phospho-alpha-D-ribose 1-diphosphate. It participates in pyrimidine metabolism; UMP biosynthesis via de novo pathway; UMP from orotate: step 1/2. Catalyzes the transfer of a ribosyl phosphate group from 5-phosphoribose 1-diphosphate to orotate, leading to the formation of orotidine monophosphate (OMP). The polypeptide is Orotate phosphoribosyltransferase (Shigella flexneri).